Here is a 410-residue protein sequence, read N- to C-terminus: NADH-quinone oxidoreductase subunit H (410 aa).

9 consecutive transmembrane segments (helical) span residues 11-31 (LVAA…LVAI), 79-99 (FVYF…FAFI), 119-139 (LPVA…GIVL), 160-180 (VISY…MAGT), 192-212 (GVWY…SMVG), 257-277 (ALAA…NMWA), 283-303 (WWPL…YFWL), 317-337 (ALGW…AAII), and 347-367 (YWTP…VLLL). The disordered stretch occupies residues 376 to 410 (ARASARQRGDEGTSPEPAFPTPPLLAGATKENAGG).

The protein belongs to the complex I subunit 1 family. NDH-1 is composed of 14 different subunits. Subunits NuoA, H, J, K, L, M, N constitute the membrane sector of the complex.

It is found in the cell membrane. It catalyses the reaction a quinone + NADH + 5 H(+)(in) = a quinol + NAD(+) + 4 H(+)(out). NDH-1 shuttles electrons from NADH, via FMN and iron-sulfur (Fe-S) centers, to quinones in the respiratory chain. The immediate electron acceptor for the enzyme in this species is believed to be menaquinone. Couples the redox reaction to proton translocation (for every two electrons transferred, four hydrogen ions are translocated across the cytoplasmic membrane), and thus conserves the redox energy in a proton gradient. This chain is NADH-quinone oxidoreductase subunit H, found in Mycobacterium bovis (strain ATCC BAA-935 / AF2122/97).